A 353-amino-acid chain; its full sequence is Probable WRKY transcription factor 7 (353 aa).

A disordered region spans residues 117 to 259 (VEEKKPETSS…SSRCHCSKKR (143 aa)). Over residues 158–176 (SHNNNNNQNQTKNGSSSSS) the composition is skewed to low complexity. Composition is skewed to polar residues over residues 184-204 (APST…SFMS) and 213-229 (THMS…QLSG). Residues 275–341 (KMADIPSDEF…YEGDHNHALV (67 aa)) constitute a DNA-binding region (WRKY).

It belongs to the WRKY group II-d family. In terms of tissue distribution, in young, mature and senescent leaves.

It is found in the nucleus. Functionally, transcription factor. Interacts specifically with the W box (5'-(T)TGAC[CT]-3'), a frequently occurring elicitor-responsive cis-acting element. The polypeptide is Probable WRKY transcription factor 7 (WRKY7) (Arabidopsis thaliana (Mouse-ear cress)).